A 368-amino-acid polypeptide reads, in one-letter code: Probable multidrug ABC transporter permease YbhR (368 aa).

Residues Met1 to Ala24 are Cytoplasmic-facing. A helical transmembrane segment spans residues Ile25–Val45. The Periplasmic portion of the chain corresponds to Thr46–Trp173. An ABC transmembrane type-2 domain is found at Ala129–Lys366. A helical membrane pass occupies residues Phe174–Leu194. The Cytoplasmic segment spans residues Ser195 to Lys222. Residues Ala223 to Trp243 traverse the membrane as a helical segment. Residues Ala244–Leu253 lie on the Periplasmic side of the membrane. The chain crosses the membrane as a helical span at residues Ala254–Ile274. The Cytoplasmic portion of the chain corresponds to Ser275–Ala284. A helical membrane pass occupies residues Phe285 to Val305. Residues Glu306–Asp339 lie on the Periplasmic side of the membrane. Residues Ile340–Tyr360 traverse the membrane as a helical segment. The Cytoplasmic portion of the chain corresponds to Ala361–Met368.

It belongs to the ABC-2 integral membrane protein family. In terms of assembly, the complex is probably composed of two ATP-binding proteins (YbhF) and two transmembrane proteins (YbhR and YbhS).

It localises to the cell inner membrane. Its function is as follows. Part of the ABC transporter complex YbhFSR that could be involved in efflux of cefoperazone. Probably involved in the translocation of the substrate across the membrane. The protein is Probable multidrug ABC transporter permease YbhR (ybhR) of Escherichia coli O157:H7.